The sequence spans 150 residues: Viral late gene transcription factor 2 (150 aa).

This sequence belongs to the orthopoxvirus VLTF-2/OPG126 family. Interacts with itself. Interacts with the late transcription factors VLTF-1/OPG093.

Functionally, acts with RNA polymerase to initiate transcription from late gene promoters. The chain is Viral late gene transcription factor 2 (OPG126) from Vaccinia virus (strain Copenhagen) (VACV).